The sequence spans 427 residues: MTEAMKITLSTQPADARWGDKATYSINNDGITLHLNGKDDSGLIQRAARKIDGLGIKHVQLTGAGWDVERSWAFWQGYKGPKGSRKVEWPDLDDEKRKELDNRLTIIDWVRDTINAPAEELGPEQLAQRAVDLLCSVACDHVSYRITKGEDLREQNYMGLHTVGRGSDRAPVLLALDYNPTGDKDAPVYACLVGKGITFDSGGYSIKQSAFMDSMKSDMGGAATVTGALAFAITRGLNKRVKLYLCCADNLISGNAFKLGDIIHYRNGKNVEVMNTDAEGRLVLADGLIDASAQKPELIIDAATLTGAAKTALGNDYHALFSFDDALAGRLLASAAEENEPFWRLPLAEFHRNQLPSNFAELNNTGSAAYPAGASTAAGFLSHFVENYQQGWLHIDCSATYRKAPVEQWSAGATGLGVRTIANLLTA.

Mn(2+) is bound by residues Lys195 and Asp200. Lys207 is an active-site residue. Mn(2+) contacts are provided by Asp218, Asp277, and Glu279. Arg281 is an active-site residue.

This sequence belongs to the peptidase M17 family. In terms of assembly, homohexamer. Requires Mn(2+) as cofactor.

It localises to the cytoplasm. The catalysed reaction is Release of an N-terminal amino acid, Xaa, from a peptide or arylamide. Xaa is preferably Glu or Asp but may be other amino acids, including Leu, Met, His, Cys and Gln.. In terms of biological role, probably plays an important role in intracellular peptide degradation. This is Peptidase B from Citrobacter koseri (strain ATCC BAA-895 / CDC 4225-83 / SGSC4696).